Reading from the N-terminus, the 454-residue chain is MLIYNTLTRRLQEFNEMHRGRVNLFVCGPTVQDHFHIGHARTYIFFDAVAKFLKLEGYSVFYLQNITDIDDKIINRAKEMGIEPSEVAKIYFSEFQEDMKRLKVDSVNFFARATLYIDEIVSQISRMMEKGYAYETDDGVYFEVRKFKDYGELSNQSLDQIIAGYRVAVNENKRNPEDFVLWKKKKAGEPSWPSPWGEGRPGWHIEDTAITETYFGDEYDIHGGGSDLIFPHHEAEIAQMRSISGKRYLAHYWIHTGMININKEKMSKSLKNFITIRDILKDYRPEDLRFAILNANYRTQIEFSKELMEESKKLIDYINDTYRKLEYVNGSGNFKIDVNSVISEMRSLAENDFDFHSVIVKLLAITGEINRNFEGINKEVAEELKKVYLWVDTFLGILEQKKEVSKGIVDDLVELRTRMRKEKNFLISDAIRDVLKKNGIHIEDRGDVTVWWQE.

Residue C27 participates in Zn(2+) binding. Positions 29–39 (PTVQDHFHIGH) match the 'HIGH' region motif. Zn(2+) is bound by residues D207, H232, and E236. Positions 265–269 (KMSKS) match the 'KMSKS' region motif. K268 is a binding site for ATP.

This sequence belongs to the class-I aminoacyl-tRNA synthetase family. It depends on Zn(2+) as a cofactor.

The protein localises to the cytoplasm. It carries out the reaction tRNA(Cys) + L-cysteine + ATP = L-cysteinyl-tRNA(Cys) + AMP + diphosphate. This chain is Cysteine--tRNA ligase, found in Thermoplasma volcanium (strain ATCC 51530 / DSM 4299 / JCM 9571 / NBRC 15438 / GSS1).